A 46-amino-acid polypeptide reads, in one-letter code: Large ribosomal subunit protein bL36B (46 aa).

Belongs to the bacterial ribosomal protein bL36 family.

The chain is Large ribosomal subunit protein bL36B from Enterobacter sp. (strain 638).